The sequence spans 366 residues: S-adenosylmethionine:tRNA ribosyltransferase-isomerase (366 aa).

The protein belongs to the QueA family. Monomer.

The protein localises to the cytoplasm. The enzyme catalyses 7-aminomethyl-7-carbaguanosine(34) in tRNA + S-adenosyl-L-methionine = epoxyqueuosine(34) in tRNA + adenine + L-methionine + 2 H(+). Its pathway is tRNA modification; tRNA-queuosine biosynthesis. Its function is as follows. Transfers and isomerizes the ribose moiety from AdoMet to the 7-aminomethyl group of 7-deazaguanine (preQ1-tRNA) to give epoxyqueuosine (oQ-tRNA). The chain is S-adenosylmethionine:tRNA ribosyltransferase-isomerase from Parasynechococcus marenigrum (strain WH8102).